Here is a 197-residue protein sequence, read N- to C-terminus: Imidazoleglycerol-phosphate dehydratase (197 aa).

It belongs to the imidazoleglycerol-phosphate dehydratase family.

Its subcellular location is the cytoplasm. It carries out the reaction D-erythro-1-(imidazol-4-yl)glycerol 3-phosphate = 3-(imidazol-4-yl)-2-oxopropyl phosphate + H2O. Its pathway is amino-acid biosynthesis; L-histidine biosynthesis; L-histidine from 5-phospho-alpha-D-ribose 1-diphosphate: step 6/9. The polypeptide is Imidazoleglycerol-phosphate dehydratase (Pseudomonas aeruginosa (strain LESB58)).